The following is a 1337-amino-acid chain: DNA mismatch repair protein Msh6 (1337 aa).

The region spanning 68–130 (PGDLVWAKME…IKYLRPYKGS (63 aa)) is the PWWP domain. The tract at residues 170–310 (AVCSEPSDTE…SEAPKRAAPV (141 aa)) is disordered. The span at 176-187 (SDTEEAEEEEME) shows a compositional bias: acidic residues. Residues 226-248 (VLDSDSDRDGSDVEFKPDVKEAS) show a composition bias toward basic and acidic residues. Over residues 257–272 (DENEATDVETDEESIE) the composition is skewed to acidic residues. Over residues 279 to 292 (PSKRKRGNVSKPSK) the composition is skewed to basic residues. Basic and acidic residues predominate over residues 294–305 (SSLENEHSEAPK). Position 1111–1118 (1111–1118 (GPNMGGKS)) interacts with ATP.

It belongs to the DNA mismatch repair MutS family.

Its subcellular location is the nucleus. Functionally, component of the post-replicative DNA mismatch repair system (MMR). Involved in B cell growth by positively regulating B cell proliferation and controlling replication efficiency. Controls cell cycle to prevent re-replication and defects in DNA damage-induced G2 checkpoint. Doesn't seem to counteract or control the immunoglobulin gene conversion (Ig GC) and to contribute to guanine/uracil mismatch repair. The chain is DNA mismatch repair protein Msh6 from Gallus gallus (Chicken).